A 475-amino-acid polypeptide reads, in one-letter code: Ribonuclease Y (475 aa).

The interval 34–73 is disordered; it reads EFERESRERRNELQRVERRLMQKEESLDKKSETLEQKDDR. One can recognise a KH domain in the interval 165-228; that stretch reads TVTVVQLPND…EVARIALEKL (64 aa). Positions 291-384 constitute an HD domain; sequence VLKHAIEVSH…VTAADAISAA (94 aa).

The protein belongs to the RNase Y family.

Functionally, endoribonuclease that initiates mRNA decay. This is Ribonuclease Y from Alkaliphilus metalliredigens (strain QYMF).